The following is a 1896-amino-acid chain: MHSRILFKGTAAAVAARRIRHILGPLMSKEGWNCSAHEVKLLNTSSGDTVKIGEISYVLKTPKNPELVPVNHMMEALPQMVTQHLRWIMQKDLLGQDVFLIGPPGPLRRSIAMQYLELTKREVEYVALSRDTTETDLKQRREIRSGTAFYIDQCAVRAATEGRILVLEGLEKAERNVLPVLNNLLENREMQLEDGRFLMSAHRYDKLLEEHTKEELDAWKIVRVSEDFRVIALGLPVPRYKGNPLDPPLRSRFQARDIYYLPFKDQLEHLYRIGANVSAERVSQLLSFATTLCSQESASLSLPDFPVDNLPSALTVLNLFPMLSVQQLVQRLYPYEAMLGKEGRTAVEGVLNRFELTDGSTKPSPTAVVNIEPVNGGQAEQAAVTLNITNQKITFQVPSGTRPIRPPNSSPTFINTPTHERLLAEMMQSHLVKDICLIGAKGCGKSVIAREFAEMLGYSIEPVMLYQDMTARDLLQQRYTLPNGDTAWRASPLVTAAQEGKLVLLDGIHRVNLGTLAVLSRLLHDRELDLYDGTRLLRFDRYQALKEELQLTDQQLQDRSIFPIHPSFRIIALAEPPVIGSTTQQWLNPEILTMFLFHTIKPLAKAEETAVLQGMIPNVPGEAVEQLQHLTHSLRKSNDPTALSLASSLSTRQLLRICRRLSQYPQESVAHAVHKACLSRFLPSLARSSLEKSLANCSIEDHPDPASEQKQLYTCTVKDGLLTIGNVSAPVYSPDEKMKVPDVLFYENVQHMMVMQDMLKDFLLGEHLLLVGNQGVGKNKIVDRFLHLMNRPREYLQLHRDTTVQTLTLQPSVRDGIIIYEDSPLVKAVKMGHILVIDEADKAPTNVTCILKALVESGEMILADGRRIVSDALEAAGRPNAIPMHPDFRMIVLANRPGFPFLGNDFFGALGDIFSCHAVDNPKPQAEFAMLKQYGPDVPDAVLQKLVAAFGELRAMADQGTITYPYSTREVVNIVKHLQKFPDEGLANVVRNVFDFDSYNKDMREVLISALHKHGIPIGAKPTSVHLAKELPLPDCKMTGYWTISQGGNTRRKLLCPTETHRIDIKGPVFLRVQSYPSKRHESRSLSFTEEQAHWQIPMNEVNIVCDVTTAKDSIYVATCNPVSLYAMKEKGDSVQCIELYDIFPRTISGVWQPFVSVAALGNPLQDQVVLHEEQGNTVLHLDLVTGAVRRLILSQDKQDEAPRKTSNWWNSKESQPGYKMCKEFAHKNWLLFYKENGNQLDVVDVLEGQVHTIHLPINLKAVFLVAEDRWLLVESKTDRKFLLTKPMHMGAEETGVCQLHAISEDAVSSGFGNNSGMEAVSPQEVSSDQLSNENLSAALGQKIVSPNRILCDTNTYANVIVGFPDLMSPNELYSFRRSLPITESRRPDMFFGSSKRTGPAKRVNCVCLLDANQVVRALPPTQVPLAEVYPKDVTPPMSAAYLEVTDLNSKRLKYIPVPRSNSMSPYTVWISKVSDTDVVMAPLGSGGVVTVDMGGYVRLWETGLDHLQRSLLEWRNMIGSEDGRPVQITIERDSGLDVSSPKHGKIDAKNAPHVGGNQWAGGTGGRDTAGLGGKGGPYRLDAGHKVYQISQAEKDAVPDEVKRAARDMAEQAFKQRLKEIEMSEYDASTYDRFSGAVRRQVQSLRIILDSLQAKGKERQWLRNQALGELDDAKIIDGLTGEKSIYKRRGELEPELGSPQQKPKRLRVLADVSGSMYRFNGVDGRLERSMEAVCMVMEALESYEHKFKYDITGHSGDGFDIELVRCDKVPKNNKERLKVLKTMHAHSQFCMSGDYTLEGTEHAIRELAHEEADEHFVIVLSDANLERYGISPDRFARVLTSNPQVNAFAIFIGSLGDQADRLQKTLPAGRSFVAMDTKEIPQILQQIFTSTMLSSA.

The N-terminal 18 residues, methionine 1–arginine 18, are a transit peptide targeting the mitochondrion. An ATP-binding site is contributed by glycine 439 to serine 446. Residues glycine 1536–threonine 1564 are disordered. The VWFA domain maps to arginine 1705 to isoleucine 1887.

As to quaternary structure, monomer.

It is found in the mitochondrion. In terms of biological role, exhibits ATPase activity in vitro. This Danio rerio (Zebrafish) protein is von Willebrand factor A domain-containing protein 8 (vwa8).